A 607-amino-acid chain; its full sequence is MGKIIGIDLGTTNSCVAVLEGDEPKVIQNPEGARTTPSVVAFKNGETQVGEVAKRQAITNPNTIQSIKREMGTDYKVDVDGKNYTPQEISAMILQNLKSTAESYLGDKVDKAVITVPAYFNDAERQATKDAGKIAGLEVERIINEPTAAALAYGLDKTEQDEKVLVFDLGGGTFDVSILELGDGVFEVLSTAGDNKLGGDDFDQVIIDYLVEEFKKENGIDLSQDKMALQRLKDAAEKAKKDLSGVSQTQISLPFISAGESGPLHLEITLTRSKFEELSDELVRRTMGPTRQALSDAGLSSNDIDEVILVGGSTRIPAVQEAVKKEVGKEPNKSVNPDEVVAMGAAIQGGVISGDVKDVVLLDVTPLSLGIEIMGGRMNTLIERNTTIPTSKSQVYSTAADNQPAVDIHVLQGERPMASDNKTLGRFSLTDIPPAPRGVPQIEVTFDIDKNGIVNVTAKDLGTNKEQNITIESSSALSDDEIDRMVKDAEQNAEEDKKRREESDLRNEADSLVFQVDKTLKDLGDNVSEDDKKQAEDKKEALKSALEGQDLEDIKTKKEELEKVVQELSMKVYQQAQQGDAAGSNQSDVEDAEYTEVKDDDDKKDNK.

Threonine 173 is subject to Phosphothreonine; by autocatalysis. Basic and acidic residues-rich tracts occupy residues 490–509 (EQNAEEDKKRREESDLRNEA) and 524–542 (GDNVSEDDKKQAEDKKEAL). 3 disordered regions span residues 490 to 510 (EQNAEEDKKRREESDLRNEAD), 524 to 555 (GDNVSEDDKKQAEDKKEALKSALEGQDLEDIK), and 574 to 607 (QQAQQGDAAGSNQSDVEDAEYTEVKDDDDKKDNK). Polar residues predominate over residues 574 to 587 (QQAQQGDAAGSNQS). The segment covering 595–607 (TEVKDDDDKKDNK) has biased composition (basic and acidic residues).

The protein belongs to the heat shock protein 70 family.

Functionally, acts as a chaperone. The polypeptide is Chaperone protein DnaK (Staphylococcus carnosus (strain TM300)).